Consider the following 411-residue polypeptide: Lysosome-associated membrane glycoprotein 2 (411 aa).

Residues 1–26 form the signal peptide; the sequence is MRLLSPVTGSKLVLLFLFLGAVRSDA. The segment at 27–188 is first lumenal domain; it reads LKLNLTDSKG…SKHEQVCKED (162 aa). The Lumenal segment spans residues 27–376; the sequence is LKLNLTDSKG…QDCSADEDNF (350 aa). A disulfide bridge connects residues cysteine 38 and cysteine 75. Asparagine 46, asparagine 57, asparagine 71, asparagine 97, asparagine 109, asparagine 117, asparagine 175, asparagine 223, asparagine 230, asparagine 243, asparagine 261, asparagine 276, asparagine 308, asparagine 318, and asparagine 357 each carry an N-linked (GlcNAc...) asparagine glycan. Residues cysteine 149 and cysteine 185 are joined by a disulfide bond. The tract at residues 189 to 229 is hinge; sequence KTATTVAPIIHTTVPSPTTTLTPTSIPVPTPTVGNYTISNG. The second lumenal domain stretch occupies residues 230–376; that stretch reads NATCLLATMG…QDCSADEDNF (147 aa). Residues cysteine 233 and cysteine 266 are joined by a disulfide bond. A disulfide bridge links cysteine 332 with cysteine 369. The chain crosses the membrane as a helical span at residues 377 to 400; sequence LVPIAVGAALGGVLILVLLAYFIG. At 401–411 the chain is on the cytoplasmic side; the sequence is LKRHHTGYEQF. Residues 402-405 are important for binding and subsequent lysosomal degradation of target proteins; it reads KRHH.

The protein belongs to the LAMP family. As to quaternary structure, monomer. Forms large homooligomers. Interacts (via its cytoplasmic region) with HSPA8; HSPA8 mediates recruitment of proteins with a KFERQ motif to the surface of the lysosome for chaperone-mediated autophagy. Interacts with HSP90 in the lysosome lumen; this enhances LAMP2 stability. Interacts with MLLT11. Interacts with ABCB9. Interacts with FURIN. Interacts with CT55; this interaction may be important for LAMP2 protein stability. Interacts with TMEM175; inhibiting the proton channel activity of TMEM175. Forms a ternary complex with RAB7A and RUFY4 (via RUN domain); the interaction with RAB7A is mediated by RUFY4 (via RUN and coiled coil domains). Extensively N-glycosylated. Contains a minor proportion of O-linked glycans. Contains sialylated glycans. In terms of tissue distribution, detected in liver, kidney, spleen and macrophages (at protein level).

Its subcellular location is the lysosome membrane. The protein resides in the endosome membrane. The protein localises to the cell membrane. It localises to the cytoplasmic vesicle. It is found in the autophagosome membrane. In terms of biological role, lysosomal membrane glycoprotein which plays an important role in lysosome biogenesis, lysosomal pH regulation and autophagy. Acts as an important regulator of lysosomal lumen pH regulation by acting as a direct inhibitor of the proton channel TMEM175, facilitating lysosomal acidification for optimal hydrolase activity. Plays an important role in chaperone-mediated autophagy, a process that mediates lysosomal degradation of proteins in response to various stresses and as part of the normal turnover of proteins with a long biological half-live. Functions by binding target proteins, such as GAPDH, NLRP3 and MLLT11, and targeting them for lysosomal degradation. In the chaperone-mediated autophagy, acts downstream of chaperones, such as HSPA8/HSC70, which recognize and bind substrate proteins and mediate their recruitment to lysosomes, where target proteins bind LAMP2. Plays a role in lysosomal protein degradation in response to starvation. Required for the fusion of autophagosomes with lysosomes during autophagy. Cells that lack LAMP2 express normal levels of VAMP8, but fail to accumulate STX17 on autophagosomes, which is the most likely explanation for the lack of fusion between autophagosomes and lysosomes. Required for normal degradation of the contents of autophagosomes. Required for efficient MHC class II-mediated presentation of exogenous antigens via its function in lysosomal protein degradation; antigenic peptides generated by proteases in the endosomal/lysosomal compartment are captured by nascent MHC II subunits. Is not required for efficient MHC class II-mediated presentation of endogenous antigens. This Rattus norvegicus (Rat) protein is Lysosome-associated membrane glycoprotein 2 (Lamp2).